Reading from the N-terminus, the 124-residue chain is Transmembrane protein 254 (124 aa).

Transmembrane regions (helical) follow at residues 16-36, 62-82, and 96-116; these read LFWVTIIILSFGYYTWVIFWP, VHAWYWLAWMIHVGESLYAIV, and LLWFLQTFLFGLASLYYLIAF.

It is found in the membrane. This Bos taurus (Bovine) protein is Transmembrane protein 254 (TMEM254).